We begin with the raw amino-acid sequence, 145 residues long: UPF0179 protein Maeo_1037 (145 aa).

It belongs to the UPF0179 family.

In Methanococcus aeolicus (strain ATCC BAA-1280 / DSM 17508 / OCM 812 / Nankai-3), this protein is UPF0179 protein Maeo_1037.